Consider the following 399-residue polypeptide: Enoyl-[acyl-carrier-protein] reductase [NADH] (399 aa).

NAD(+) contacts are provided by residues Gly-48–Tyr-53, Phe-74–Glu-75, Asp-111–Ala-112, and Leu-139–Ala-140. Tyr-225 contributes to the substrate binding site. Tyr-235 serves as the catalytic Proton donor. NAD(+)-binding positions include Lys-244 and Val-274–Thr-276.

Belongs to the TER reductase family. In terms of assembly, monomer.

The enzyme catalyses a 2,3-saturated acyl-[ACP] + NAD(+) = a (2E)-enoyl-[ACP] + NADH + H(+). It functions in the pathway lipid metabolism; fatty acid biosynthesis. In terms of biological role, involved in the final reduction of the elongation cycle of fatty acid synthesis (FAS II). Catalyzes the reduction of a carbon-carbon double bond in an enoyl moiety that is covalently linked to an acyl carrier protein (ACP). The protein is Enoyl-[acyl-carrier-protein] reductase [NADH] of Yersinia pestis bv. Antiqua (strain Antiqua).